Reading from the N-terminus, the 670-residue chain is DNA topoisomerase 6 subunit B (670 aa).

The disordered stretch occupies residues 1–30 (MAGDDLVETKKGSSKNSKDSNESKLKQKSP). Residues 7 to 25 (VETKKGSSKNSKDSNESKL) show a composition bias toward basic and acidic residues. ATP-binding positions include Asn60, Asp160, 181 to 182 (TK), 190 to 197 (GKFGLGAK), and Lys516.

Belongs to the TOP6B family. In terms of assembly, homodimer. Heterotetramer of two TOP6A and two TOP6B subunits. Interacts with SPO11-2, but not with SPO11-1, RHL1 or BIN4. As to expression, highly expressed in leaves, stems, flowers and seedlings.

It is found in the nucleus. It catalyses the reaction ATP-dependent breakage, passage and rejoining of double-stranded DNA.. In terms of biological role, component of the DNA topoisomerase VI involved in chromatin organization and progression of endoreduplication cycles. Relaxes both positive and negative superturns and exhibits a strong decatenase activity. The B subunit binds ATP. Involved in cell-elongation processes. In Arabidopsis thaliana (Mouse-ear cress), this protein is DNA topoisomerase 6 subunit B.